The primary structure comprises 126 residues: Large ribosomal subunit protein bL12c (126 aa).

The protein belongs to the bacterial ribosomal protein bL12 family. In terms of assembly, homodimer. Part of the ribosomal stalk of the 50S ribosomal subunit. Forms a multimeric L10(L12)X complex, where L10 forms an elongated spine to which 2 to 4 L12 dimers bind in a sequential fashion. Binds GTP-bound translation factors.

It is found in the plastid. The protein localises to the cyanelle. Functionally, forms part of the ribosomal stalk which helps the ribosome interact with GTP-bound translation factors. Is thus essential for accurate translation. This Cyanophora paradoxa protein is Large ribosomal subunit protein bL12c.